A 438-amino-acid chain; its full sequence is MVVARTLFSISATLIIFLALFLHVNAVQETREPKHESSRNTSTVDNLSDGEWHEHAVKDPEEIAAMVDMSIRNSTYRRKLGFFSSCSTGNPIDDCWRCDKKWHRRRKRLADCAIGFGRNAVGGRDGRYYIVTDPSDHDPVTPKPGTLRYAVIQDEPLWIVFKRDMVITLSQELIMNSFKTIDGRGVNVHIAGGACLTVQYVTNIIIHGINIHDCKRTGNAMVRSSESHYGWRTMADGDGISIFGSSHIWIDHNSLSSCADGLIDAIMGSTAITISNNYLTHHNEAILLGHTDSYTRDKMMQVTIAYNHFGEGLIQRMPRCRHGYFHVVNNDYTHWEMYAIGGSANPTINSQGNRFLAPGNRFAKEVTKRVGAGKGEWNNWNWRSQGDLMLNGAYFTSSGAGASANYARASSLAAKSSSLVGMLTSSSGALKCRIGTLC.

The N-terminal stretch at 1–26 is a signal peptide; that stretch reads MVVARTLFSISATLIIFLALFLHVNA. Residues Asn-40, Asn-46, and Asn-73 are each glycosylated (N-linked (GlcNAc...) asparagine). The Ca(2+) site is built by Asp-236, Asp-260, and Asp-264. The active site involves Arg-316.

Belongs to the polysaccharide lyase 1 family. It depends on Ca(2+) as a cofactor.

It carries out the reaction Eliminative cleavage of (1-&gt;4)-alpha-D-galacturonan to give oligosaccharides with 4-deoxy-alpha-D-galact-4-enuronosyl groups at their non-reducing ends.. It functions in the pathway glycan metabolism; pectin degradation; 2-dehydro-3-deoxy-D-gluconate from pectin: step 2/5. This is Putative pectate lyase 14 from Arabidopsis thaliana (Mouse-ear cress).